We begin with the raw amino-acid sequence, 428 residues long: D-serine dehydratase (428 aa).

Residue Lys57 is modified to N6-(pyridoxal phosphate)lysine. Residues Tyr203, Tyr210, Thr255, Gly286, and Asn287 each contribute to the pyridoxal 5'-phosphate site. Residues His398 and Cys400 each coordinate Zn(2+).

This sequence belongs to the DSD1 family. As to quaternary structure, homodimer. Requires pyridoxal 5'-phosphate as cofactor. Zn(2+) is required as a cofactor.

It catalyses the reaction D-serine = pyruvate + NH4(+). Its activity is regulated as follows. Sodium cyanoborohydride, N-ethylmaleimide, hydroxylamine, phenyhydrazin and EDTA are inhibitors of the catalytic activity. In terms of biological role, catalyzes the conversion of D-serine to pyruvate and ammonia. May play a role in D-serine detoxification. The chain is D-serine dehydratase from Saccharomyces cerevisiae (strain ATCC 204508 / S288c) (Baker's yeast).